Here is a 495-residue protein sequence, read N- to C-terminus: Calcium-dependent protein kinase 11 (495 aa).

In terms of domain architecture, Protein kinase spans 26-284; sequence YLLGKKLGQG…AHEALCHPWI (259 aa). ATP is bound by residues 32–40 and Lys55; that span reads LGQGQFGTT. Asp150 serves as the catalytic Proton acceptor. At Ser190 the chain carries Phosphoserine. The segment at 290–320 is autoinhibitory domain; sequence APDKPLDPAVLSRLKQFSQMNKIKKMALRVI. 4 EF-hand domains span residues 327-362, 363-398, 399-434, and 438-468; these read EEIG…VGSE, LMES…MNKM, EREE…FGLC, and LDDM…GDGV. Ca(2+) contacts are provided by Asp340, Asp342, Ser344, Thr346, Glu351, Asp376, Asp378, Ser380, Thr382, Glu387, Asp412, Asp414, Ser416, Tyr418, Glu423, Asp446, Asp448, Asp450, Lys452, and Glu457.

The protein belongs to the protein kinase superfamily. Ser/Thr protein kinase family. CDPK subfamily. Interacts with Di19.

The protein resides in the cytoplasm. Its subcellular location is the nucleus. The catalysed reaction is L-seryl-[protein] + ATP = O-phospho-L-seryl-[protein] + ADP + H(+). It carries out the reaction L-threonyl-[protein] + ATP = O-phospho-L-threonyl-[protein] + ADP + H(+). Its activity is regulated as follows. Activated by calcium. Autophosphorylation may play an important role in the regulation of the kinase activity. Functionally, may play a role in signal transduction pathways that involve calcium as a second messenger. Functions as a regulator of the calcium-mediated abscisic acid (ABA) signaling pathway. Phosphorylates ABA-responsive transcription factors ABF1 and ABF4 in vitro. The sequence is that of Calcium-dependent protein kinase 11 (CPK11) from Arabidopsis thaliana (Mouse-ear cress).